The following is an 865-amino-acid chain: Bifunctional uridylyltransferase/uridylyl-removing enzyme (865 aa).

Residues M1 to L318 are uridylyltransferase. A uridylyl-removing region spans residues I319 to L675. Residues V437–L559 enclose the HD domain. ACT domains follow at residues Q676–H762 and R789–A865. The disordered stretch occupies residues D747–R767. Over residues A751–R767 the composition is skewed to basic residues.

It belongs to the GlnD family. Requires Mg(2+) as cofactor.

It carries out the reaction [protein-PII]-L-tyrosine + UTP = [protein-PII]-uridylyl-L-tyrosine + diphosphate. The catalysed reaction is [protein-PII]-uridylyl-L-tyrosine + H2O = [protein-PII]-L-tyrosine + UMP + H(+). Its activity is regulated as follows. Uridylyltransferase (UTase) activity is inhibited by glutamine, while glutamine activates uridylyl-removing (UR) activity. In terms of biological role, modifies, by uridylylation and deuridylylation, the PII regulatory proteins (GlnB and homologs), in response to the nitrogen status of the cell that GlnD senses through the glutamine level. Under low glutamine levels, catalyzes the conversion of the PII proteins and UTP to PII-UMP and PPi, while under higher glutamine levels, GlnD hydrolyzes PII-UMP to PII and UMP (deuridylylation). Thus, controls uridylylation state and activity of the PII proteins, and plays an important role in the regulation of nitrogen assimilation and metabolism. The protein is Bifunctional uridylyltransferase/uridylyl-removing enzyme of Bordetella parapertussis (strain 12822 / ATCC BAA-587 / NCTC 13253).